The chain runs to 290 residues: Probable branched-chain-amino-acid aminotransferase (290 aa).

N6-(pyridoxal phosphate)lysine is present on Lys-155.

It belongs to the class-IV pyridoxal-phosphate-dependent aminotransferase family. Pyridoxal 5'-phosphate is required as a cofactor.

The enzyme catalyses L-leucine + 2-oxoglutarate = 4-methyl-2-oxopentanoate + L-glutamate. It catalyses the reaction L-isoleucine + 2-oxoglutarate = (S)-3-methyl-2-oxopentanoate + L-glutamate. It carries out the reaction L-valine + 2-oxoglutarate = 3-methyl-2-oxobutanoate + L-glutamate. It participates in amino-acid biosynthesis; L-isoleucine biosynthesis; L-isoleucine from 2-oxobutanoate: step 4/4. Its pathway is amino-acid biosynthesis; L-leucine biosynthesis; L-leucine from 3-methyl-2-oxobutanoate: step 4/4. The protein operates within amino-acid biosynthesis; L-valine biosynthesis; L-valine from pyruvate: step 4/4. Functionally, acts on leucine, isoleucine and valine. This chain is Probable branched-chain-amino-acid aminotransferase (ilvE), found in Rickettsia felis (strain ATCC VR-1525 / URRWXCal2) (Rickettsia azadi).